Here is a 318-residue protein sequence, read N- to C-terminus: Taste receptor type 2 member 7 (318 aa).

Residues 1–9 are Extracellular-facing; that stretch reads MTDKVQTTL. Residues 10–30 traverse the membrane as a helical segment; that stretch reads LFLAIGEFSVGILGNAFIGLV. At 31-55 the chain is on the cytoplasmic side; the sequence is NCMDWVKKRKIASIDLILTSLAISR. A helical membrane pass occupies residues 56–76; that stretch reads ICLLCVILLDCFMLVLYPDVY. Residues 77-94 are Extracellular-facing; the sequence is ATGKQMRIIDFFWTLTNH. A helical membrane pass occupies residues 95 to 115; that stretch reads LSIWFATCLSIYYFFKIANFF. Topologically, residues 116–128 are cytoplasmic; that stretch reads HPLFLWMKWRIDR. A helical transmembrane segment spans residues 129 to 149; that stretch reads VISWILLGCMVLSVFINLPAT. Over 150-187 the chain is Extracellular; the sequence is ENLNADFRRCVKAKRKTNLTWSCRVTKAQHASTKLFLN. An N-linked (GlcNAc...) asparagine glycan is attached at asparagine 167. Residues 188-208 traverse the membrane as a helical segment; sequence LVTLLPFSVCLMSFFLLILSL. The Cytoplasmic portion of the chain corresponds to 209–235; the sequence is WRHIRRMQLSATGCRDPSTEAHVRALK. Residues 236-256 form a helical membrane-spanning segment; the sequence is AVISFLLLFIAYYLSFLIATS. Topologically, residues 257 to 266 are extracellular; the sequence is SYFIPETELA. The helical transmembrane segment at 267 to 287 threads the bilayer; the sequence is VIFGEFIALIYPSSHSFILIL. The Cytoplasmic portion of the chain corresponds to 288 to 318; that stretch reads GNSKLRRASLKVLWTVMSILKGRKFQQHKQI.

The protein belongs to the G-protein coupled receptor T2R family.

It localises to the membrane. Its function is as follows. Gustducin-coupled receptor implicated in the perception of bitter compounds in the oral cavity and the gastrointestinal tract. Signals through PLCB2 and the calcium-regulated cation channel TRPM5. This is Taste receptor type 2 member 7 (TAS2R7) from Macaca mulatta (Rhesus macaque).